The following is a 600-amino-acid chain: CBP80/20-dependent translation initiation factor (600 aa).

Met-1 is subject to N-acetylmethionine. The segment covering 1-18 (MENSSAASASSEAGSSRS) has biased composition (low complexity). 4 disordered regions span residues 1–20 (MENS…RSQE), 43–62 (DKTE…SQWT), 134–154 (KQPL…EDGD), and 175–370 (PHEA…SSPQ). An interaction with NCBP1/CBP80 region spans residues 1-305 (MENSSAASAS…PPCSPDTLTP (305 aa)). Residue Ser-18 is modified to Phosphoserine. The span at 52–62 (QRTQSHISQWT) shows a compositional bias: polar residues. The segment covering 139 to 152 (HIDREGCGKGKLED) has biased composition (basic and acidic residues). The span at 183 to 198 (TKKLFRRRRNDRRRQQ) shows a compositional bias: basic residues. Positions 258-272 (PPGDKGEAGSHRNAK) are enriched in basic and acidic residues. Thr-289 bears the Phosphothreonine mark. A Phosphoserine modification is found at Ser-299. The segment covering 321 to 339 (AEIKHKDTVLPERLRERPK) has biased composition (basic and acidic residues). The 202-residue stretch at 378 to 579 (MEILNIMRNN…LEVIELHANS (202 aa)) folds into the MIF4G domain.

Belongs to the CTIF family. As to quaternary structure, interacts with NCBP1/CBP80; the interaction is direct. Associates with the eukaryotic translation initiation factor 3 (eIF-3) complex. Widely expressed.

Its subcellular location is the cytoplasm. The protein localises to the perinuclear region. Specifically required for the pioneer round of mRNA translation mediated by the cap-binding complex (CBC), that takes place during or right after mRNA export via the nuclear pore complex (NPC). Acts via its interaction with the NCBP1/CBP80 component of the CBC complex and recruits the 40S small subunit of the ribosome via eIF3. In contrast, it is not involved in steady state translation, that takes place when the CBC complex is replaced by cytoplasmic cap-binding protein eIF4E. Also required for nonsense-mediated mRNA decay (NMD), the pioneer round of mRNA translation mediated by the cap-binding complex playing a central role in nonsense-mediated mRNA decay (NMD). The sequence is that of CBP80/20-dependent translation initiation factor (Ctif) from Mus musculus (Mouse).